Consider the following 280-residue polypeptide: Protein FLOURY 1-like (280 aa).

The chain crosses the membrane as a helical span at residues 22–42 (GFGFGIFVIGCSSQFFNLVFL). Residues 153-187 (VALSETELDEKNHHGEEEESEDEEESQSQNDEDQL) form a disordered region. The segment covering 169 to 187 (EEESEDEEESQSQNDEDQL) has biased composition (acidic residues). A GTD-binding domain is found at 188 to 280 (LDVITLRTMV…LDDDEDKIQM (93 aa)).

Its subcellular location is the membrane. This chain is Protein FLOURY 1-like, found in Arabidopsis thaliana (Mouse-ear cress).